Here is a 164-residue protein sequence, read N- to C-terminus: Ubiquitin-fold modifier-conjugating enzyme 1 (164 aa).

The active-site Glycyl thioester intermediate is the C116.

The protein belongs to the ubiquitin-conjugating enzyme family. UFC1 subfamily.

E2-like enzyme which forms an intermediate with UFM1 via a thioester linkage. This is Ubiquitin-fold modifier-conjugating enzyme 1 from Drosophila sechellia (Fruit fly).